We begin with the raw amino-acid sequence, 176 residues long: Ribosome maturation factor RimM (176 aa).

The PRC barrel domain occupies 96–176; that stretch reads PEDEFYWRDL…QILVDWDPDF (81 aa).

This sequence belongs to the RimM family. As to quaternary structure, binds ribosomal protein uS19.

It is found in the cytoplasm. In terms of biological role, an accessory protein needed during the final step in the assembly of 30S ribosomal subunit, possibly for assembly of the head region. Essential for efficient processing of 16S rRNA. May be needed both before and after RbfA during the maturation of 16S rRNA. It has affinity for free ribosomal 30S subunits but not for 70S ribosomes. This Shewanella piezotolerans (strain WP3 / JCM 13877) protein is Ribosome maturation factor RimM.